The chain runs to 2472 residues: Highly reducing polyketide synthase xilA (2472 aa).

The Ketosynthase family 3 (KS3) domain occupies 1 to 417 (MPGGVRDLPA…GTNGHCIIDD (417 aa)). Residues cysteine 162, histidine 298, and histidine 340 each act as for beta-ketoacyl synthase activity in the active site. Positions 442 to 502 (NDINGKSGTN…QRKHHHPKTD (61 aa)) are disordered. The span at 450 to 489 (TNGANGANRVNGVNGVNGVNGVNGANGHSNASLLSNGSNN) shows a compositional bias: low complexity. The Malonyl-CoA:ACP transacylase (MAT) domain maps to 597-932 (FIFTGQGAQW…CTGTLFVHNV (336 aa)). The tract at residues 991–1129 (HDLLGSKVPG…GQIKVEVAKF (139 aa)) is N-terminal hotdog fold. In terms of domain architecture, PKS/mFAS DH spans 991 to 1294 (HDLLGSKVPG…FTSLNNEQES (304 aa)). Catalysis depends on histidine 1023, which acts as the Proton acceptor; for dehydratase activity. The segment at 1141–1294 (GRLVDAQTWY…FTSLNNEQES (154 aa)) is C-terminal hotdog fold. Aspartate 1207 serves as the catalytic Proton donor; for dehydratase activity. The interval 1289–1505 (NNEQESPSTG…IITVHALRSI (217 aa)) is methyltransferase (CMeT) domain. The region spanning 1724-2036 (GLLTSLYFKP…KGTHIGKMVI (313 aa)) is the Enoyl reductase (ER) domain. The Ketoreductase (KR) domain maps to 2060 to 2239 (ASYILVGGLS…ATTVSLGFIK (180 aa)). Residues 2391 to 2469 (ETVKLVSDAI…SIARVIVEEA (79 aa)) enclose the Carrier domain. Serine 2428 is modified (O-(pantetheine 4'-phosphoryl)serine).

The cofactor is pantetheine 4'-phosphate.

It functions in the pathway secondary metabolite biosynthesis. In terms of biological role, highly reducing polyketide synthase; part of the gene cluster that mediates the biosynthesis of the 6-methyl-2-pyrone derivative xylariolide D. XilA produces the 5-alkyl-6-methyl-2-pyrone backbone called prexylariolide D via sequential condensations of 4 malonyl-CoA units with one acetyl-CoA starter unit. During the biosynthesis, the linear polyketide chain is branched by the addition of an acetyl unit as the origin of the methyl group at the 2-pyrone ring. Prexylariolide D is then hydroxylated at the side chain by xilC to form the final product, xylariolide D. The polypeptide is Highly reducing polyketide synthase xilA (Penicillium crustosum (Blue mold fungus)).